The primary structure comprises 207 residues: Probable GTP-binding protein EngB (207 aa).

In terms of domain architecture, EngB-type G spans 24 to 199 (GGYEVAFAGR…RGIVGGWLGL (176 aa)). GTP contacts are provided by residues 32–39 (GRSNAGKS), 59–63 (GRTQQ), 77–80 (DLPG), 144–147 (TKAD), and 178–180 (YSG). Positions 39 and 61 each coordinate Mg(2+).

This sequence belongs to the TRAFAC class TrmE-Era-EngA-EngB-Septin-like GTPase superfamily. EngB GTPase family. Requires Mg(2+) as cofactor.

Necessary for normal cell division and for the maintenance of normal septation. The polypeptide is Probable GTP-binding protein EngB (Xanthomonas oryzae pv. oryzae (strain MAFF 311018)).